Reading from the N-terminus, the 213-residue chain is Protein-L-isoaspartate O-methyltransferase (213 aa).

Serine 60 is a catalytic residue.

This sequence belongs to the methyltransferase superfamily. L-isoaspartyl/D-aspartyl protein methyltransferase family.

The protein localises to the cytoplasm. The catalysed reaction is [protein]-L-isoaspartate + S-adenosyl-L-methionine = [protein]-L-isoaspartate alpha-methyl ester + S-adenosyl-L-homocysteine. Catalyzes the methyl esterification of L-isoaspartyl residues in peptides and proteins that result from spontaneous decomposition of normal L-aspartyl and L-asparaginyl residues. It plays a role in the repair and/or degradation of damaged proteins. This chain is Protein-L-isoaspartate O-methyltransferase, found in Roseobacter denitrificans (strain ATCC 33942 / OCh 114) (Erythrobacter sp. (strain OCh 114)).